The chain runs to 343 residues: MNFLRKTLFPFAILYGFITSIRNFLFDCGILKSHAFPIPVIAVGNLSVGGTGKTPQIEYLIRLLSNKYQIATLSRGYKRKSEGFILANPTSNAEILGDEPFQFYKKFPNIQVAVAANRKNGIERLLSLPNKPEIILLDDAFQHRKVKAGFYILLTAYNDLFINDFMLPTGNLRESRSGAKRANMIIVTKCPKDISELAQNKIKEALINYNNKKAEVFFTFIDYDDKIYSANKALNVNEVKTASKLLLAGIAKPESFFAHLQSQNDECLVYPDHHHFLEKNITDIKEKAKNKIIITTEKDFVRLSEKLNSDNLFYLPIKSLFVNNEKKFDKKIINYVESSTTNG.

47–54 is an ATP binding site; sequence SVGGTGKT.

It belongs to the LpxK family.

It carries out the reaction a lipid A disaccharide + ATP = a lipid IVA + ADP + H(+). It functions in the pathway glycolipid biosynthesis; lipid IV(A) biosynthesis; lipid IV(A) from (3R)-3-hydroxytetradecanoyl-[acyl-carrier-protein] and UDP-N-acetyl-alpha-D-glucosamine: step 6/6. Transfers the gamma-phosphate of ATP to the 4'-position of a tetraacyldisaccharide 1-phosphate intermediate (termed DS-1-P) to form tetraacyldisaccharide 1,4'-bis-phosphate (lipid IVA). The protein is Tetraacyldisaccharide 4'-kinase of Flavobacterium psychrophilum (strain ATCC 49511 / DSM 21280 / CIP 103535 / JIP02/86).